The primary structure comprises 79 residues: Serine protease inhibitor Kazal-type 1 (79 aa).

The first 18 residues, 1–18 (MKVAIIFLLSALALLSLA), serve as a signal peptide directing secretion. In terms of domain architecture, Kazal-like spans 26–79 (NGKTPNCPKQIMGCPRIYDPVCGTNGITYPSECSLCFENRKFGTSIHIQRRGTC). 3 disulfide bridges follow: Cys-32/Cys-61, Cys-39/Cys-58, and Cys-47/Cys-79.

The protein localises to the secreted. In terms of biological role, serine protease inhibitor which exhibits anti-trypsin activity. In the pancreas, protects against trypsin-catalyzed premature activation of zymogens. Its function is as follows. In the male reproductive tract, binds to sperm heads where it modulates sperm capacitance by inhibiting calcium uptake and nitrogen oxide (NO) production. This is Serine protease inhibitor Kazal-type 1 from Rattus norvegicus (Rat).